Here is an 89-residue protein sequence, read N- to C-terminus: Small ribosomal subunit protein uS15 (89 aa).

Belongs to the universal ribosomal protein uS15 family. As to quaternary structure, part of the 30S ribosomal subunit. Forms a bridge to the 50S subunit in the 70S ribosome, contacting the 23S rRNA.

Functionally, one of the primary rRNA binding proteins, it binds directly to 16S rRNA where it helps nucleate assembly of the platform of the 30S subunit by binding and bridging several RNA helices of the 16S rRNA. In terms of biological role, forms an intersubunit bridge (bridge B4) with the 23S rRNA of the 50S subunit in the ribosome. The polypeptide is Small ribosomal subunit protein uS15 (Oenococcus oeni (strain ATCC BAA-331 / PSU-1)).